We begin with the raw amino-acid sequence, 389 residues long: Ribonucleoside-diphosphate reductase subunit M2 (389 aa).

Ser-20 is subject to Phosphoserine. Thr-33 carries the phosphothreonine modification. The Cy signature appears at 49-51 (RRI). Residues Asp-138, Glu-169, and His-172 each contribute to the Fe cation site. Tyr-176 is a catalytic residue. Residues Glu-232, Glu-266, and His-269 each contribute to the Fe cation site.

This sequence belongs to the ribonucleoside diphosphate reductase small chain family. As to quaternary structure, heterodimer of a large and a small subunit. Interacts (via Cy motif and when phosphorylated at Thr-33) with CCNF; the interaction occurs exclusively in G2 and early M. The cofactor is Fe cation. Phosphorylation on Ser-20 relieves the inhibitory effect on Wnt signaling. Phosphorylated on Thr-33 by CDK1 and CDK2; predominantly in G2 and M phase. Post-translationally, ubiquitinated by the SCF(CCNF) E3 ubiquitin-protein ligase complex; leading to its degradation by the proteasome.

The protein localises to the cytoplasm. The protein resides in the nucleus. The catalysed reaction is a 2'-deoxyribonucleoside 5'-diphosphate + [thioredoxin]-disulfide + H2O = a ribonucleoside 5'-diphosphate + [thioredoxin]-dithiol. In terms of biological role, provides the precursors necessary for DNA synthesis. Catalyzes the biosynthesis of deoxyribonucleotides from the corresponding ribonucleotides. Inhibits Wnt signaling. In Homo sapiens (Human), this protein is Ribonucleoside-diphosphate reductase subunit M2 (RRM2).